Reading from the N-terminus, the 439-residue chain is Oocyte zinc finger protein XlCOF28 (439 aa).

C2H2-type zinc fingers lie at residues 6-28 (YECT…QRTH), 34-56 (FKCT…KKCH), 62-84 (YMCT…IRTH), 90-112 (FTCT…LRIH), 118-140 (HKCN…QRTH), 146-168 (FQCT…LRIH), 174-196 (YKCS…QRTH), 202-224 (FQCS…ERTH), and 230-252 (YKCS…QKTH). 2 disordered regions span residues 246-275 (KLHQ…APKT) and 285-304 (AGLE…ESPE). 4 C2H2-type zinc fingers span residues 333-355 (HKCT…QRTH), 361-383 (FKCS…RKIH), 389-411 (YTCA…RRTH), and 417-439 (YICA…QRIH).

The protein belongs to the krueppel C2H2-type zinc-finger protein family.

The protein localises to the nucleus. Functionally, may be involved in transcriptional regulation. The polypeptide is Oocyte zinc finger protein XlCOF28 (Xenopus laevis (African clawed frog)).